A 134-amino-acid polypeptide reads, in one-letter code: MSWQAYVDDHLMCDIEGHEGHRLTAAAIVGQDGSVWAQSATFPQFKPEEMNGIMTDFNEPGHLAPTGLHLGGTKYMVIQGEAGAVIRGKKGSGGITIKKTGQALVFGIYEEPVTPGKCNMVVERLGDYLLEQGL.

Cysteines 13 and 118 form a disulfide. An Involved in PIP2 interaction motif is present at residues 84–100; that stretch reads AVIRGKKGSGGITIKKT. A Phosphothreonine modification is found at Thr-114.

The protein belongs to the profilin family. Occurs in many kinds of cells as a complex with monomeric actin in a 1:1 ratio. Post-translationally, phosphorylated by MAP kinases.

It localises to the cytoplasm. The protein resides in the cytoskeleton. Binds to actin and affects the structure of the cytoskeleton. At high concentrations, profilin prevents the polymerization of actin, whereas it enhances it at low concentrations. The protein is Profilin-4 of Olea europaea (Common olive).